The sequence spans 466 residues: Probable multidrug resistance protein NorM (466 aa).

A run of 11 helical transmembrane segments spans residues 68-90, 110-132, 142-164, 177-199, 209-231, 251-273, 288-310, 331-353, 368-387, 407-429, and 433-455; these read AHTV…SPLV, LWVA…HILI, ALAQ…FIAL, PLWI…IHGL, GAGL…IAAW, LVRQ…YGLF, LAAH…GIGM, AGLV…IILG, SAAT…TFFI, MTLA…VLAF, and LGAV…LLVL.

The protein belongs to the multi antimicrobial extrusion (MATE) (TC 2.A.66.1) family.

It localises to the cell inner membrane. Multidrug efflux pump. This is Probable multidrug resistance protein NorM (norM) from Bradyrhizobium diazoefficiens (strain JCM 10833 / BCRC 13528 / IAM 13628 / NBRC 14792 / USDA 110).